The chain runs to 214 residues: Large ribosomal subunit protein uL18 (214 aa).

Belongs to the universal ribosomal protein uL18 family. As to quaternary structure, part of the 50S ribosomal subunit. Contacts the 5S and 23S rRNAs.

Functionally, this is one of the proteins that bind and probably mediate the attachment of the 5S RNA into the large ribosomal subunit, where it forms part of the central protuberance. The polypeptide is Large ribosomal subunit protein uL18 (Aeropyrum pernix (strain ATCC 700893 / DSM 11879 / JCM 9820 / NBRC 100138 / K1)).